The chain runs to 305 residues: ATP-dependent Clp protease proteolytic subunit-related protein 4, chloroplastic (305 aa).

The N-terminal 68 residues, 1-68, are a transit peptide targeting the chloroplast; that stretch reads MEVAAATATS…SSDLCGAKLR (68 aa).

The protein belongs to the peptidase S14 family. As to quaternary structure, component of the chloroplastic Clp protease core complex which consist of at least 16 proteins: CLPP4 (3 copies), CLPP5 (3 copies), CLPR4 (2 copies), ClpP1 (1 copy), CLPP6 (1 copy), CLPR2 (1 copy), CLPT1 (1 copy), CLPT2 (1 copy) and 3 copies of CLPP3 and/or CLPR1 and/or CLPR3. The core complex is organized in two heptameric rings, one containing CLPP3,4,5,6 in a 1:2:3:1 ratio and the other CLPP1 and CLPR1,2,3,4 in a 3:1:1:1:1 ratio.

The protein resides in the plastid. The protein localises to the chloroplast. Functionally, involved in plastid protein homeostasis. In Arabidopsis thaliana (Mouse-ear cress), this protein is ATP-dependent Clp protease proteolytic subunit-related protein 4, chloroplastic.